Consider the following 457-residue polypeptide: MDYTASCLIFLFIAAGTVFGTDHETRLIGDLFANYNKVVRPVETYKDQVVVTVGLQLIQLINVDEVNQIVSTNIRLKQQWRDVNLKWDPAKYGGVKKIRIPSSDVWSPDLVLYNNADGDFAISKDTKILLEYTGKITWTPPAIFKSYCEIIVTYFPFDQQNCSMKFGTWTYDGSLLVINPERDRPDLSNFMASGEWMMKDYRCWKHWVYYTCCPDKPYLDITYHFVLQRLPLYFIVNVIIPCLLFSFLTGLVFYLPTDSGEKMTLSISVLLSLTVFLLVIVELIPSTSSAVPLIGKYMLFTMVFVIASIIITVIVINTHHRSPSTHTMPPWVRKIFIETIPNIMFFSTMKRPSQEKQPQKTFAEEMDISHISGKLGPAAVTYQSPALKNPDVKSAIEGIKYIAETMKSDQESNKASEEWKFVAMVLDHILLAVFMTVCVIGTLAVFAGRIIEMNMQE.

The signal sequence occupies residues 1 to 20; that stretch reads MDYTASCLIFLFIAAGTVFG. The Extracellular portion of the chain corresponds to 21–230; the sequence is TDHETRLIGD…ITYHFVLQRL (210 aa). Intrachain disulfides connect C148/C162 and C212/C213. N161 carries N-linked (GlcNAc...) asparagine glycosylation. Helical transmembrane passes span 231–255, 263–281, and 297–316; these read PLYF…VFYL, MTLS…LVIV, and YMLF…VIVI. Residues 317–428 lie on the Cytoplasmic side of the membrane; it reads NTHHRSPSTH…WKFVAMVLDH (112 aa). The helical transmembrane segment at 429-447 threads the bilayer; sequence ILLAVFMTVCVIGTLAVFA.

It belongs to the ligand-gated ion channel (TC 1.A.9) family. Acetylcholine receptor (TC 1.A.9.1) subfamily. Alpha-1/CHRNA1 sub-subfamily. As to quaternary structure, one of the alpha chains that assemble within the acetylcholine receptor, a pentamer of two alpha chains, a beta, a delta, and a gamma or epsilon chains.

It localises to the postsynaptic cell membrane. Its subcellular location is the cell membrane. It carries out the reaction K(+)(in) = K(+)(out). The enzyme catalyses Na(+)(in) = Na(+)(out). Upon acetylcholine binding, the AChR responds by an extensive change in conformation that affects all subunits and leads to opening of an ion-conducting channel across the plasma membrane. The chain is Acetylcholine receptor subunit alpha-1-B (chrna1-b) from Xenopus laevis (African clawed frog).